The chain runs to 92 residues: UPF0335 protein BMEI0289 (92 aa).

This sequence belongs to the UPF0335 family.

The polypeptide is UPF0335 protein BMEI0289 (Brucella melitensis biotype 1 (strain ATCC 23456 / CCUG 17765 / NCTC 10094 / 16M)).